Here is a 55-residue protein sequence, read N- to C-terminus: Light-harvesting polypeptide B-800/860 beta chain (55 aa).

At 1–21 the chain is on the cytoplasmic side; the sequence is ADANKVWPTGLTVAEAEELHT. Residues 22-44 form a helical membrane-spanning segment; it reads YVTNGFRVFVGIAVVAHVLVFAA. His38 lines the a bacteriochlorophyll pocket. Over 45–55 the chain is Periplasmic; it reads HPWGRGGALVA.

The protein belongs to the antenna complex beta subunit family. As to quaternary structure, the core complex is formed by different alpha and beta chains, binding bacteriochlorophyll molecules, and arranged most probably in tetrameric structures disposed around the reaction center. The non-pigmented gamma chains may constitute additional components.

The protein localises to the cell inner membrane. Antenna complexes are light-harvesting systems, which transfer the excitation energy to the reaction centers. The protein is Light-harvesting polypeptide B-800/860 beta chain of Rhodocyclus tenuis (Rhodospirillum tenue).